Here is a 26-residue protein sequence, read N- to C-terminus: Omega-conotoxin CVIC (26 aa).

Cystine bridges form between cysteine 1-cysteine 16, cysteine 8-cysteine 20, and cysteine 15-cysteine 26. At cysteine 26 the chain carries Cysteine amide.

It belongs to the conotoxin O1 superfamily. As to expression, expressed by the venom duct.

It localises to the secreted. In terms of biological role, omega-conotoxins act at presynaptic membranes, they bind and block voltage-gated calcium channels (Cav). This toxin blocks N-, P- and Q-type calcium channels. The chain is Omega-conotoxin CVIC from Conus catus (Cat cone).